The sequence spans 384 residues: uncharacterized protein (384 aa).

In terms of domain architecture, Integrase catalytic spans 137–303; that stretch reads EHDAPNRLWQ…VPGSRYQPSA (167 aa).

This is an uncharacterized protein from Escherichia coli (strain K12).